Reading from the N-terminus, the 778-residue chain is Endonuclease MutS2 (778 aa).

Position 332 to 339 (332 to 339) interacts with ATP; sequence GPNTGGKT. The region spanning 703 to 778 is the Smr domain; that stretch reads IDLRGKMVDE…GLGCTVVTLK (76 aa).

This sequence belongs to the DNA mismatch repair MutS family. MutS2 subfamily. Homodimer. Binds to stalled ribosomes, contacting rRNA.

Functionally, endonuclease that is involved in the suppression of homologous recombination and thus may have a key role in the control of bacterial genetic diversity. In terms of biological role, acts as a ribosome collision sensor, splitting the ribosome into its 2 subunits. Detects stalled/collided 70S ribosomes which it binds and splits by an ATP-hydrolysis driven conformational change. Acts upstream of the ribosome quality control system (RQC), a ribosome-associated complex that mediates the extraction of incompletely synthesized nascent chains from stalled ribosomes and their subsequent degradation. Probably generates substrates for RQC. This is Endonuclease MutS2 from Fusobacterium nucleatum subsp. nucleatum (strain ATCC 25586 / DSM 15643 / BCRC 10681 / CIP 101130 / JCM 8532 / KCTC 2640 / LMG 13131 / VPI 4355).